The chain runs to 371 residues: E3 ubiquitin-protein ligase RHF1A (371 aa).

Residues 46-87 (CSICLEPFTLQDPSTVTSCKHEYHLQCIIEWSQRSKECPICW) form an RING-type; atypical zinc finger. 2 disordered regions span residues 199-254 (HQNS…SSLP) and 348-371 (EANS…GETC). Over residues 200–225 (QNSNPCPSPGSMTPSPVSGHSSIPAD) the composition is skewed to polar residues. Over residues 226 to 252 (SNNGSRISPGPSPSRSSQSPKSPEASS) the composition is skewed to low complexity.

As to quaternary structure, interacts with KRP6. Expressed in stems, flowers, green siliques, cauline leaves, seeds and roots.

The enzyme catalyses S-ubiquitinyl-[E2 ubiquitin-conjugating enzyme]-L-cysteine + [acceptor protein]-L-lysine = [E2 ubiquitin-conjugating enzyme]-L-cysteine + N(6)-ubiquitinyl-[acceptor protein]-L-lysine.. The protein operates within protein modification; protein ubiquitination. Its function is as follows. E3 ubiquitin-protein ligase involved in the positive regulation of the gametogenesis progression. Mediates the proteasomal degradation of KRP6, a cyclin-dependent kinase inhibitor which accumulates during meiosis and blocks the progression of subsequent mitoses during gametophyte development. Functions in association with RHF2A. Possesses E3 ubiquitin-protein ligase activity when associated with the E2 enzyme UBC8 in vitro. The polypeptide is E3 ubiquitin-protein ligase RHF1A (Arabidopsis thaliana (Mouse-ear cress)).